Reading from the N-terminus, the 429-residue chain is Citrate synthase, plasmid (429 aa).

Active-site residues include His-306 and Asp-364.

This sequence belongs to the citrate synthase family.

It catalyses the reaction oxaloacetate + acetyl-CoA + H2O = citrate + CoA + H(+). It participates in carbohydrate metabolism; tricarboxylic acid cycle; isocitrate from oxaloacetate: step 1/2. Functionally, the exact function of the plasmid-encoded citrate synthase is not clear, it could help nodulation by allowing the bacteria to use citrate as a chelator of iron and calcium. The polypeptide is Citrate synthase, plasmid (pcsA) (Rhizobium tropici).